Here is a 208-residue protein sequence, read N- to C-terminus: Glutathione S-transferase F6 (208 aa).

One can recognise a GST N-terminal domain in the interval 2–83 (AGIKVFGHPA…YIAHEFSDKG (82 aa)). Glutathione is bound by residues 12–13 (ST), 41–42 (HK), 54–55 (KV), and 67–68 (ES). In terms of domain architecture, GST C-terminal spans 89–208 (TGKDMAIIAM…TSRPSAQKVL (120 aa)).

Belongs to the GST superfamily. Phi family.

The protein localises to the cytoplasm. It is found in the cytosol. The catalysed reaction is RX + glutathione = an S-substituted glutathione + a halide anion + H(+). Involved in camalexin biosynthesis by probably catalyzing the conjugation of GSH with indole-3-acetonitrile (IAN). May be involved in the conjugation of reduced glutathione to a wide number of exogenous and endogenous hydrophobic electrophiles and have a detoxification role against certain herbicides. This Arabidopsis thaliana (Mouse-ear cress) protein is Glutathione S-transferase F6 (GSTF6).